The following is a 242-amino-acid chain: Biosynthetic peptidoglycan transglycosylase (242 aa).

The chain crosses the membrane as a helical span at residues 19–39 (ILAALAVFWGGGIALFSVVPV).

Belongs to the glycosyltransferase 51 family.

Its subcellular location is the cell inner membrane. It catalyses the reaction [GlcNAc-(1-&gt;4)-Mur2Ac(oyl-L-Ala-gamma-D-Glu-L-Lys-D-Ala-D-Ala)](n)-di-trans,octa-cis-undecaprenyl diphosphate + beta-D-GlcNAc-(1-&gt;4)-Mur2Ac(oyl-L-Ala-gamma-D-Glu-L-Lys-D-Ala-D-Ala)-di-trans,octa-cis-undecaprenyl diphosphate = [GlcNAc-(1-&gt;4)-Mur2Ac(oyl-L-Ala-gamma-D-Glu-L-Lys-D-Ala-D-Ala)](n+1)-di-trans,octa-cis-undecaprenyl diphosphate + di-trans,octa-cis-undecaprenyl diphosphate + H(+). Its pathway is cell wall biogenesis; peptidoglycan biosynthesis. Functionally, peptidoglycan polymerase that catalyzes glycan chain elongation from lipid-linked precursors. This is Biosynthetic peptidoglycan transglycosylase from Salmonella paratyphi A (strain ATCC 9150 / SARB42).